A 391-amino-acid polypeptide reads, in one-letter code: Protein CAJ1 (391 aa).

One can recognise a J domain in the interval 4-73 (ETEYYDILGI…RSKYDQFGKE (70 aa)). The interval 119-161 (KEDEEGTAATETEKADESTDGGMVKHDTNKAESLKKDKLSKEQ) is disordered. Residues 129-161 (ETEKADESTDGGMVKHDTNKAESLKKDKLSKEQ) are compositionally biased toward basic and acidic residues. Lys-132 participates in a covalent cross-link: Glycyl lysine isopeptide (Lys-Gly) (interchain with G-Cter in ubiquitin).

The polypeptide is Protein CAJ1 (CAJ1) (Saccharomyces cerevisiae (strain ATCC 204508 / S288c) (Baker's yeast)).